We begin with the raw amino-acid sequence, 413 residues long: Putative syntaxin-5 (413 aa).

Residues 1 to 391 are Cytoplasmic-facing; the sequence is MSDFHNIRSR…RYLQNISKNR (391 aa). The interval 257–290 is disordered; sequence KNRRDKFSSGAAVPMGLPSSSSGANVRSKLLQDD. Positions 321–383 constitute a t-SNARE coiled-coil homology domain; sequence LEYAQARSNT…DMAHSELVRY (63 aa). The helical; Anchor for type IV membrane protein transmembrane segment at 392–412 threads the bilayer; that stretch reads WLMIQVFGVLMVFFVVFVLFL. Position 413 (T413) is a topological domain, extracellular.

The protein belongs to the syntaxin family.

The protein resides in the membrane. Potentially involved in docking of synaptic vesicles at presynaptic active zones. This is Putative syntaxin-5 (syx-5) from Caenorhabditis elegans.